The sequence spans 237 residues: Bax inhibitor 1 (237 aa).

Residues 1 to 29 (MNIFDRKINFDALLKFSHITPSTQQHLKK) lie on the Cytoplasmic side of the membrane. A Glycyl lysine isopeptide (Lys-Gly) (interchain with G-Cter in ubiquitin) cross-link involves residue lysine 7. Residues 30 to 50 (VYASFALCMFVAAAGAYVHVV) form a helical membrane-spanning segment. The Lumenal segment spans residues 51–52 (TR). The chain crosses the membrane as a helical span at residues 53-73 (FIQAGLLSALGSLGLMIWLMA). Residues 74-86 (TPHSHETEQKRLG) are Cytoplasmic-facing. Residues 87-107 (LLAGFAFLTGVGLGPALDLCI) form a helical membrane-spanning segment. The Lumenal portion of the chain corresponds to 108 to 112 (AINPS). The helical transmembrane segment at 113–133 (ILPTAFMGTAMIFTCFTLSAL) threads the bilayer. At 134-139 (YARRRS) the chain is on the cytoplasmic side. Residues 140-160 (YLFLGGILMSAMSLMVLSSLG) traverse the membrane as a helical segment. Topologically, residues 161–166 (NLFFGS) are lumenal. A helical membrane pass occupies residues 167-187 (IWLFQANLYVGLVVMCGFVLF). Residues 188 to 206 (DTQLIIEKAENGDKDYIWH) lie on the Cytoplasmic side of the membrane. An intramembrane region (helical) is located at residues 207–227 (CVDLFSDFVTLFRKLMMILAM). The Cytoplasmic segment spans residues 228–237 (NEKDKKKEKK).

The protein belongs to the BI1 family. As to quaternary structure, interacts with BCL2 and BCL2L1. Interacts with ERN1. Post-translationally, ubiquitinated by BFAR, leading to proteasomal degradation.

The protein resides in the endoplasmic reticulum membrane. Its function is as follows. Endoplasmic reticulum (ER)-resident protein that confers cellular protection as an anti-apoptotic protein by limiting multiple stress-inducing pathways surrounding the endoplasmic reticulum and mitochondria. Inhibits the activities of the key sensor for the endoplasmic reticulum unfolded protein response IRE1alpha/ERN1 both directly and by blocking BAX/BAK binding. Modulates ER calcium homeostasis by acting as a calcium-leak channel. Negatively regulates autophagy and autophagosome formation, especially during periods of nutrient deprivation, and reduces cell survival during starvation. The protein is Bax inhibitor 1 (TMBIM6) of Sus scrofa (Pig).